A 388-amino-acid polypeptide reads, in one-letter code: Homoserine O-acetyltransferase (388 aa).

Positions 55-354 (PIVLIEHALT…PTGHDGFLIE (300 aa)) constitute an AB hydrolase-1 domain. The active-site Nucleophile is the Ser150. A substrate-binding site is contributed by Arg220. Active-site residues include Asp318 and His348. Substrate is bound at residue Asp349.

The protein belongs to the AB hydrolase superfamily. MetX family. Homodimer.

It localises to the cytoplasm. It catalyses the reaction L-homoserine + acetyl-CoA = O-acetyl-L-homoserine + CoA. It participates in amino-acid biosynthesis; L-methionine biosynthesis via de novo pathway; O-acetyl-L-homoserine from L-homoserine: step 1/1. Functionally, transfers an acetyl group from acetyl-CoA to L-homoserine, forming acetyl-L-homoserine. The polypeptide is Homoserine O-acetyltransferase (Corynebacterium urealyticum (strain ATCC 43042 / DSM 7109)).